The primary structure comprises 81 residues: Photosystem I iron-sulfur center (81 aa).

4Fe-4S ferredoxin-type domains lie at 2 to 31 and 39 to 68; these read SHAVKIYDTCIGCTQCVRACPTDVLEMVPW and IASAPRTEDCVGCKRCEAACPTDFLSVRVY. [4Fe-4S] cluster is bound by residues Cys11, Cys14, Cys17, Cys21, Cys48, Cys51, Cys54, and Cys58.

In terms of assembly, the eukaryotic PSI reaction center is composed of at least 11 subunits. The cofactor is [4Fe-4S] cluster.

Its subcellular location is the plastid. The protein resides in the chloroplast thylakoid membrane. The enzyme catalyses reduced [plastocyanin] + hnu + oxidized [2Fe-2S]-[ferredoxin] = oxidized [plastocyanin] + reduced [2Fe-2S]-[ferredoxin]. In terms of biological role, apoprotein for the two 4Fe-4S centers FA and FB of photosystem I (PSI); essential for photochemical activity. FB is the terminal electron acceptor of PSI, donating electrons to ferredoxin. The C-terminus interacts with PsaA/B/D and helps assemble the protein into the PSI complex. Required for binding of PsaD and PsaE to PSI. PSI is a plastocyanin/cytochrome c6-ferredoxin oxidoreductase, converting photonic excitation into a charge separation, which transfers an electron from the donor P700 chlorophyll pair to the spectroscopically characterized acceptors A0, A1, FX, FA and FB in turn. The protein is Photosystem I iron-sulfur center of Ostreococcus tauri.